We begin with the raw amino-acid sequence, 501 residues long: MFDNILEQQRIEKAKELKNLGINPYPHFLEKEMSLKTFKDKFSYILEQVEKRDESVNAVVAGRLKLLRIAGKSIFANIEDEDTNLQIYFSKDSVGEELYTILKKNLEVGDIVLVKGFPFVTKTGEFSLHASEVKLATKAIVPLPEKYHGLTDIEQRYRKRYVDMIMNVEVRKDFLVRSKVVSLIRHFFENKGFLEVETPMMHPIAGGANAKPFVTFHNSLGVERFLRIAPELYLKRLIVGGFEAVFEINRCFRNEGMDLTHNPEFTTIEFYWAYHNYKDLMDLTEELFALLLDKLNLGKTIEFDGKMINFSKPFERITYKDALCKYGGLDRDLIEDKEKILTKLKADGFEANEKLELGHLQAELFDNYVEEKLINPTFVIDFPISISPLSRRSDEDSQIAERFELFICGRELANGFNELNDPLDQYERFLKQIEAKNAGDEEACEMDEDFVNALGYGMPPTAGQGIGIDRLVMLLTNKKSIRDVILFPAMRPLKSELKEKE.

Glutamate 404 and glutamate 411 together coordinate Mg(2+).

Belongs to the class-II aminoacyl-tRNA synthetase family. In terms of assembly, homodimer. The cofactor is Mg(2+).

It is found in the cytoplasm. It carries out the reaction tRNA(Lys) + L-lysine + ATP = L-lysyl-tRNA(Lys) + AMP + diphosphate. The chain is Lysine--tRNA ligase (lysS) from Campylobacter jejuni subsp. jejuni serotype O:2 (strain ATCC 700819 / NCTC 11168).